A 236-amino-acid chain; its full sequence is 1-(5-phosphoribosyl)-5-[(5-phosphoribosylamino)methylideneamino] imidazole-4-carboxamide isomerase (236 aa).

The active-site Proton acceptor is aspartate 8. Aspartate 129 (proton donor) is an active-site residue.

The protein belongs to the HisA/HisF family.

The protein resides in the cytoplasm. It catalyses the reaction 1-(5-phospho-beta-D-ribosyl)-5-[(5-phospho-beta-D-ribosylamino)methylideneamino]imidazole-4-carboxamide = 5-[(5-phospho-1-deoxy-D-ribulos-1-ylimino)methylamino]-1-(5-phospho-beta-D-ribosyl)imidazole-4-carboxamide. The protein operates within amino-acid biosynthesis; L-histidine biosynthesis; L-histidine from 5-phospho-alpha-D-ribose 1-diphosphate: step 4/9. The polypeptide is 1-(5-phosphoribosyl)-5-[(5-phosphoribosylamino)methylideneamino] imidazole-4-carboxamide isomerase (Methanospirillum hungatei JF-1 (strain ATCC 27890 / DSM 864 / NBRC 100397 / JF-1)).